Reading from the N-terminus, the 1780-residue chain is Protein TIC 214 (1780 aa).

6 helical membrane passes run 19 to 39 (IINSVVVVGLYYGFLTTFSIG), 68 to 88 (FIAGQLMMFISIYYAPLHLAL), 91 to 111 (PHTITVLALPYLLFHFFWNNN), 133 to 153 (VFLNNLIFQLFNHFILPSSML), 176 to 196 (VGWLIGHILFMKWVGLVLVWI), and 227 to 247 (IFSILLFITCVYYLGRTPSPI). A disordered region spans residues 251 to 275 (KLKGTSETEERGGTKQDQEVSTEEA). Basic and acidic residues predominate over residues 254-268 (GTSETEERGGTKQDQ).

This sequence belongs to the TIC214 family. In terms of assembly, part of the Tic complex.

It localises to the plastid. The protein resides in the chloroplast inner membrane. In terms of biological role, involved in protein precursor import into chloroplasts. May be part of an intermediate translocation complex acting as a protein-conducting channel at the inner envelope. The chain is Protein TIC 214 from Draba nemorosa (Woodland whitlowgrass).